A 418-amino-acid polypeptide reads, in one-letter code: Translation initiation factor 2 subunit gamma (418 aa).

One can recognise a tr-type G domain in the interval 7–206 (QPEVNIGVVG…GIQKYIPTPQ (200 aa)). Residues 16–23 (GHVDHGKT) form a G1 region. Mg(2+) is bound by residues D19, T23, G44, and T46. 19-24 (DHGKTT) is a GTP binding site. The G2 stretch occupies residues 44-48 (GMTIK). C59, C62, C74, and C77 together coordinate Zn(2+). Residues 93–96 (DAPG) are G3. GTP contacts are provided by residues 149-152 (NKVD) and 184-186 (SAL). The tract at residues 149 to 152 (NKVD) is G4. The segment at 184–186 (SAL) is G5.

The protein belongs to the TRAFAC class translation factor GTPase superfamily. Classic translation factor GTPase family. EIF2G subfamily. As to quaternary structure, heterotrimer composed of an alpha, a beta and a gamma chain. The cofactor is Mg(2+).

The catalysed reaction is GTP + H2O = GDP + phosphate + H(+). Its function is as follows. eIF-2 functions in the early steps of protein synthesis by forming a ternary complex with GTP and initiator tRNA. This chain is Translation initiation factor 2 subunit gamma, found in Sulfurisphaera tokodaii (strain DSM 16993 / JCM 10545 / NBRC 100140 / 7) (Sulfolobus tokodaii).